Consider the following 230-residue polypeptide: Capsid protein (230 aa).

Residues Pro-19–Leu-48 are compositionally biased toward low complexity. A disordered region spans residues Pro-19 to Ala-54.

It belongs to the tymoviruses capsid protein family.

The protein localises to the virion. Its function is as follows. Self-assembles to form a T=3 icosahedral capsid composed of 180 copies of the capsid protein. The capsid encapsulates the single-stranded RNA genome. The protein is Capsid protein of Grapevine fleck virus (isolate Italy/MT48) (GFkV).